Consider the following 418-residue polypeptide: Tyrosine--tRNA ligase (418 aa).

L-tyrosine is bound at residue Tyr34. The 'HIGH' region signature appears at 39–48 (PTADSLHLGH). 2 residues coordinate L-tyrosine: Tyr169 and Gln173. The 'KMSKS' region signature appears at 229–233 (KFGKS). An ATP-binding site is contributed by Lys232. The region spanning 352–418 (NNIVELLVSS…GKKKYFVLTY (67 aa)) is the S4 RNA-binding domain.

It belongs to the class-I aminoacyl-tRNA synthetase family. TyrS type 1 subfamily. As to quaternary structure, homodimer.

It is found in the cytoplasm. The enzyme catalyses tRNA(Tyr) + L-tyrosine + ATP = L-tyrosyl-tRNA(Tyr) + AMP + diphosphate + H(+). Functionally, catalyzes the attachment of tyrosine to tRNA(Tyr) in a two-step reaction: tyrosine is first activated by ATP to form Tyr-AMP and then transferred to the acceptor end of tRNA(Tyr). This Streptococcus pneumoniae (strain CGSP14) protein is Tyrosine--tRNA ligase.